We begin with the raw amino-acid sequence, 206 residues long: Large ribosomal subunit protein uL4 (206 aa).

Residues 63–93 (MYKQKGTGRARHHSARAPQFRGGGKAHGPVV) are disordered. Over residues 64–77 (YKQKGTGRARHHSA) the composition is skewed to basic residues.

Belongs to the universal ribosomal protein uL4 family. In terms of assembly, part of the 50S ribosomal subunit.

In terms of biological role, one of the primary rRNA binding proteins, this protein initially binds near the 5'-end of the 23S rRNA. It is important during the early stages of 50S assembly. It makes multiple contacts with different domains of the 23S rRNA in the assembled 50S subunit and ribosome. Forms part of the polypeptide exit tunnel. The protein is Large ribosomal subunit protein uL4 of Rhizobium meliloti (strain 1021) (Ensifer meliloti).